The following is a 433-amino-acid chain: Serine hydroxymethyltransferase (433 aa).

Residues leucine 131 and 135 to 137 each bind (6S)-5,6,7,8-tetrahydrofolate; that span reads GHL. An N6-(pyridoxal phosphate)lysine modification is found at lysine 240.

This sequence belongs to the SHMT family. In terms of assembly, homodimer. The cofactor is pyridoxal 5'-phosphate.

It is found in the cytoplasm. The catalysed reaction is (6R)-5,10-methylene-5,6,7,8-tetrahydrofolate + glycine + H2O = (6S)-5,6,7,8-tetrahydrofolate + L-serine. It participates in one-carbon metabolism; tetrahydrofolate interconversion. It functions in the pathway amino-acid biosynthesis; glycine biosynthesis; glycine from L-serine: step 1/1. Functionally, catalyzes the reversible interconversion of serine and glycine with tetrahydrofolate (THF) serving as the one-carbon carrier. This reaction serves as the major source of one-carbon groups required for the biosynthesis of purines, thymidylate, methionine, and other important biomolecules. Also exhibits THF-independent aldolase activity toward beta-hydroxyamino acids, producing glycine and aldehydes, via a retro-aldol mechanism. In Bifidobacterium adolescentis (strain ATCC 15703 / DSM 20083 / NCTC 11814 / E194a), this protein is Serine hydroxymethyltransferase.